A 91-amino-acid chain; its full sequence is Early E3B 10.4 kDa protein (91 aa).

The N-terminal stretch at 1–22 (MIPRVFILLTLVALFCACSTLA) is a signal peptide. Residues 23-34 (AVSHIEVDCIPA) lie on the Lumenal side of the membrane. The helical transmembrane segment at 35-60 (FTVYLLYGFVTLTLICSLITVVIAFI) threads the bilayer. The Cytoplasmic segment spans residues 61–91 (QCIDWVCVRFAYLRHHPQYRDRTIAELLRIL).

Belongs to the adenoviridae E3B family.

The protein resides in the host endoplasmic reticulum membrane. Functionally, down-regulates the EGF receptor. This is Early E3B 10.4 kDa protein from Homo sapiens (Human).